We begin with the raw amino-acid sequence, 354 residues long: Neutral protease 2 homolog SNOG_02177 (354 aa).

Residues 1–19 (MKFQILSVAALASLASAVS) form the signal peptide. A propeptide spanning residues 20 to 182 (DALDKRDSPL…WIDLAKRTIV (163 aa)) is cleaved from the precursor. Disulfide bonds link cysteine 186–cysteine 257 and cysteine 264–cysteine 282. N-linked (GlcNAc...) asparagine glycosylation is present at asparagine 214. Zn(2+) is bound at residue histidine 306. Glutamate 307 is a catalytic residue. Zn(2+) is bound at residue histidine 310.

It belongs to the peptidase M35 family. It depends on Zn(2+) as a cofactor.

It localises to the secreted. It carries out the reaction Preferential cleavage of bonds with hydrophobic residues in P1'. Also 3-Asn-|-Gln-4 and 8-Gly-|-Ser-9 bonds in insulin B chain.. Secreted metalloproteinase that allows assimilation of proteinaceous substrates. Shows high activities on basic nuclear substrates such as histone and protamine. This is Neutral protease 2 homolog SNOG_02177 from Phaeosphaeria nodorum (strain SN15 / ATCC MYA-4574 / FGSC 10173) (Glume blotch fungus).